A 131-amino-acid chain; its full sequence is Small ribosomal subunit protein uS8 (131 aa).

The protein belongs to the universal ribosomal protein uS8 family. As to quaternary structure, part of the 30S ribosomal subunit. Contacts proteins S5 and S12.

In terms of biological role, one of the primary rRNA binding proteins, it binds directly to 16S rRNA central domain where it helps coordinate assembly of the platform of the 30S subunit. The protein is Small ribosomal subunit protein uS8 of Chlorobium limicola (strain DSM 245 / NBRC 103803 / 6330).